Consider the following 208-residue polypeptide: Protein late bloomer (208 aa).

4 consecutive transmembrane segments (helical) span residues 10-30 (IASI…IGWI), 41-61 (FVIA…LGIF), 67-87 (SVVL…LQIV), and 174-194 (FIIV…LAVF).

The protein belongs to the tetraspanin (TM4SF) family. As to expression, transiently expressed on motor axons, growth cones and terminal arbors.

The protein resides in the membrane. It is found in the synapse. In terms of biological role, facilitates synapse formation. The polypeptide is Protein late bloomer (lbm) (Drosophila melanogaster (Fruit fly)).